The sequence spans 336 residues: MLVLGIESSCDETGLAIYDYTSKTLVADVLYSQIDLHKKYGGVVPELASREHIAKLNILTKELLSNANINFNDLSCIAYTAMPGLIGALMVGATFAKTLGLIHNIDTVAVHHLEGHLLSPLLDQSSDIKYPFVALLVSGGHTQLFEVREFGEYSLLGESIDDAAGEAFDKTAKLLGMSYPGGVEVANLAEKATDKKKYDLPRPMKNKPNLDFSFSGLKTAVLNTWYSETDQSYENKANLCYAFQEAAIDVLVTKCEKALQKTGNKRLVISGGVSANKLLRSKLDILSKNKGYEIFFPPMKYCTDNGAMIALAGAYRYANSFRDSNLEINVKARAQI.

Fe cation-binding residues include histidine 112 and histidine 116. Residues 136–140 (LVSGG), aspartate 169, glycine 182, and asparagine 276 each bind substrate. Aspartate 304 is a Fe cation binding site.

It belongs to the KAE1 / TsaD family. The cofactor is Fe(2+).

The protein resides in the cytoplasm. It catalyses the reaction L-threonylcarbamoyladenylate + adenosine(37) in tRNA = N(6)-L-threonylcarbamoyladenosine(37) in tRNA + AMP + H(+). Its function is as follows. Required for the formation of a threonylcarbamoyl group on adenosine at position 37 (t(6)A37) in tRNAs that read codons beginning with adenine. Is involved in the transfer of the threonylcarbamoyl moiety of threonylcarbamoyl-AMP (TC-AMP) to the N6 group of A37, together with TsaE and TsaB. TsaD likely plays a direct catalytic role in this reaction. This chain is tRNA N6-adenosine threonylcarbamoyltransferase, found in Francisella philomiragia subsp. philomiragia (strain ATCC 25017 / CCUG 19701 / FSC 153 / O#319-036).